Reading from the N-terminus, the 401-residue chain is Zinc finger CCHC domain-containing protein 12 (401 aa).

2 disordered regions span residues 1–20 (MASI…PLPP) and 270–292 (DSDE…SAGP). Residues 270-282 (DSDEDVILVEPDD) are compositionally biased toward acidic residues. Residues 345 to 362 (VHCSHCGEEGHSKETCDN) form a CCHC-type zinc finger.

The protein belongs to the ZCCHC12 family. As to quaternary structure, interacts with SMAD1 and CREB-binding protein (CBP). Forms a protein-DNA complex through its association with SMAD1.

Its function is as follows. Transcriptional coactivator in the bone morphogenetic protein (BMP)-signaling pathway. It positively modulates BMP signaling by interacting with SMAD1 and associating with CBP in the transcription complex. It contributes to the BMP-induced enhancement of cholinergic-neuron-specific gene expression. The chain is Zinc finger CCHC domain-containing protein 12 (Zcchc12) from Rattus norvegicus (Rat).